A 497-amino-acid chain; its full sequence is Probable cytosol aminopeptidase (497 aa).

Residues Lys267 and Asp272 each coordinate Mn(2+). The active site involves Lys279. Mn(2+) is bound by residues Asp290, Asp349, and Glu351. Arg353 is a catalytic residue.

This sequence belongs to the peptidase M17 family. It depends on Mn(2+) as a cofactor.

The protein resides in the cytoplasm. It catalyses the reaction Release of an N-terminal amino acid, Xaa-|-Yaa-, in which Xaa is preferably Leu, but may be other amino acids including Pro although not Arg or Lys, and Yaa may be Pro. Amino acid amides and methyl esters are also readily hydrolyzed, but rates on arylamides are exceedingly low.. The catalysed reaction is Release of an N-terminal amino acid, preferentially leucine, but not glutamic or aspartic acids.. Presumably involved in the processing and regular turnover of intracellular proteins. Catalyzes the removal of unsubstituted N-terminal amino acids from various peptides. The protein is Probable cytosol aminopeptidase of Pseudomonas putida (strain W619).